Here is a 250-residue protein sequence, read N- to C-terminus: MSYQVEVCIDNIESLHNALEGGATRIELCSSLALGGLTPSYGFMTLAAKLSTVPVYAMIRPRQGDFLYSDDEFAIIQQDILSAQQAGLQGVVFGLLTADGDIDVARTRVLIELAHSLQLGVTFHRAFDQCRDPFAALEQIIDLGCERILTSGLAASAPLGKEMLTQLVAHSQSRLAIMAGAGVSPVNVADLALTTGVKELHLSGKSTRPSKMTFIASGSKMGAADQDDFIIPITHTATIRNTVLALKSIS.

Belongs to the CutC family.

The protein localises to the cytoplasm. In Vibrio vulnificus (strain YJ016), this protein is PF03932 family protein CutC.